Here is a 227-residue protein sequence, read N- to C-terminus: Iron-regulated surface determinant protein C (227 aa).

A signal peptide spans 1-28 (MKNILKVFNTTILALIIIIATFSNSANA). One can recognise an NEAT domain in the interval 29–150 (ADSGTLNYEV…KFNGPTDVAG (122 aa)). The heme site is built by S47, I48, Y132, and Y136. The disordered stretch occupies residues 149–191 (AGANAPGKDDKNSASGSDKGSDGATTGQSESNSSNKDKVENPQ). The span at 161 to 172 (SASGSDKGSDGA) shows a compositional bias: low complexity. Residues 173–182 (TTGQSESNSS) show a composition bias toward polar residues. Residues 189–193 (NPQTN) carry the NPQTN sorting signal motif. Residue T192 is modified to Pentaglycyl murein peptidoglycan amidated threonine. Residues 193–227 (NAGTPAYIYAIPVASLALLIAITLFVRKKSKGNVE) constitute a propeptide, removed by sortase B.

This sequence belongs to the IsdC family. As to quaternary structure, monomer. Interacts with IsdA.

It localises to the secreted. Its subcellular location is the cell wall. Involved in heme (porphyrin) scavenging. Binds hemoglobin and almost exclusively free-base protoporphyrin IX. Probably has a role as the central conduit of the isd heme uptake system, i.e. mediates the transfer of the iron-containing nutrient from IsdABH to the membrane translocation system IsdDEF. Hemin-free IsdC (apo-IsdC) acquires hemin from hemin-containing IsdA (holo-IsdA) probably through the activated holo-IsdA-apo-IsdC complex and due to the higher affinity of apo-IsdC for the cofactor. The reaction is reversible. The chain is Iron-regulated surface determinant protein C (isdC) from Staphylococcus aureus (strain bovine RF122 / ET3-1).